We begin with the raw amino-acid sequence, 628 residues long: Cytoplasmic dynein 1 intermediate chain 1 (628 aa).

Basic and acidic residues-rich tracts occupy residues 1–13 (MSDK…ELER) and 20–60 (QIRE…RETE). The interval 1-114 (MSDKSDLKAE…RTLQWDTDPS (114 aa)) is disordered. An N-acetylserine modification is found at S2. S50 carries the phosphoserine modification. Residues 70 to 79 (PEPPLVPTPM) show a composition bias toward pro residues. Over residues 80 to 90 (SPSSKSVSTPS) the composition is skewed to low complexity. Residue S83 is modified to Phosphoserine. A Phosphothreonine modification is found at T88. Phosphoserine is present on residues S90, S94, and S97. Residues 105–114 (RTLQWDTDPS) show a composition bias toward polar residues. The interval 130–146 (KLGVSKVTQVDFLPREV) is interaction with DYNLT1. A disordered region spans residues 152 to 204 (ETQTPLATHQSEEDEEDEEMVEPKIGHDSELENQEKKQETKEAPPRELTEEEK). T159 is modified (phosphothreonine). S162 and S180 each carry phosphoserine. The segment covering 172–204 (VEPKIGHDSELENQEKKQETKEAPPRELTEEEK) has biased composition (basic and acidic residues). WD repeat units lie at residues 268–317 (SKHR…TTPE), 321–361 (HCQS…RTPV), 370–411 (AHTH…TPQE), 420–460 (SKPV…AGIG), 465–510 (GHQG…PLYS), 513–553 (DNAD…EVPT), and 559–598 (EGAS…VPHN). S618 carries the phosphoserine modification.

Belongs to the dynein intermediate chain family. As to quaternary structure, homodimer. The cytoplasmic dynein 1 complex consists of two catalytic heavy chains (HCs) and a number of non-catalytic subunits presented by intermediate chains (ICs), light intermediate chains (LICs) and light chains (LCs); the composition seems to vary in respect to the IC, LIC and LC composition. The heavy chain homodimer serves as a scaffold for the probable homodimeric assembly of the respective non-catalytic subunits. The ICs and LICs bind directly to the HC dimer and the LCs assemble on the IC dimer. Interacts with DYNC1H1. Interacts with DYNLT1 and DYNLT3. Interacts with DCTN1. Interacts with DYNLL2. Interacts with MCRS1; the interaction is required for the proper distribution of centriolar satellites.

Its subcellular location is the cytoplasm. The protein localises to the chromosome. It localises to the centromere. It is found in the kinetochore. The protein resides in the cytoskeleton. Its subcellular location is the spindle pole. Functionally, acts as one of several non-catalytic accessory components of the cytoplasmic dynein 1 complex that are thought to be involved in linking dynein to cargos and to adapter proteins that regulate dynein function. Cytoplasmic dynein 1 acts as a motor for the intracellular retrograde motility of vesicles and organelles along microtubules. The intermediate chains mediate the binding of dynein to dynactin via its 150 kDa component (p150-glued) DCTN1. May play a role in mediating the interaction of cytoplasmic dynein with membranous organelles and kinetochores. This Mus musculus (Mouse) protein is Cytoplasmic dynein 1 intermediate chain 1 (Dync1i1).